Reading from the N-terminus, the 578-residue chain is Arginine--tRNA ligase (578 aa).

The short motif at 127 to 137 (PNLAKEMHVGH) is the 'HIGH' region element.

This sequence belongs to the class-I aminoacyl-tRNA synthetase family. As to quaternary structure, monomer.

It is found in the cytoplasm. It catalyses the reaction tRNA(Arg) + L-arginine + ATP = L-arginyl-tRNA(Arg) + AMP + diphosphate. This is Arginine--tRNA ligase from Pseudomonas fluorescens (strain ATCC BAA-477 / NRRL B-23932 / Pf-5).